A 716-amino-acid chain; its full sequence is Calpain clp-4 (716 aa).

Residues 31–53 (DDDDKQEAPVAVSKAPKGKGSNH) form a disordered region. The Calpain catalytic domain maps to 240 to 536 (LFEDPEFPAT…FTQMEVCNLT (297 aa)). Active-site residues include C295, H452, and N476.

This sequence belongs to the peptidase C2 family.

Functionally, calcium-regulated non-lysosomal thiol-protease which catalyzes limited proteolysis of substrates. Promotes starvation-induced muscle atrophy. The sequence is that of Calpain clp-4 from Caenorhabditis elegans.